Reading from the N-terminus, the 784-residue chain is Receptor-like protein 38 (784 aa).

Positions 1–30 (MIRSQSYCFLGITITIYFFFCLLPLPNTFA) are cleaved as a signal peptide. The Extracellular segment spans residues 31–752 (SPPTQSLCRH…SELEEPVLNW (722 aa)). LRR repeat units follow at residues 109–133 (LQHL…IENL), 134–157 (SHLT…IGNL), 158–180 (NQLE…SFAN), 182–204 (TKLS…LSNL), and 205–227 (TSLA…DLSG). N-linked (GlcNAc...) asparagine glycosylation occurs at Asn-132. 3 N-linked (GlcNAc...) asparagine glycosylation sites follow: Asn-180, Asn-193, and Asn-203. An LRR 6; degenerate repeat occupies 228–251 (LHNLEQIFGNENSFVGLFPASLLK). 10 LRR repeats span residues 252-276 (ISSL…NTSS), 278-301 (SRLT…LSKL), 302-324 (VNLE…SISK), 326-349 (VNLT…IWKP), 351-373 (NLQS…EVVN), 374-400 (GAKL…NFRF), 402-422 (FFLD…LKNS), 423-446 (TDFN…CMDS), 447-470 (TMLR…LMNC), and 472-496 (DMEF…SRKS). An N-linked (GlcNAc...) asparagine glycan is attached at Asn-273. Asn-327 carries an N-linked (GlcNAc...) asparagine glycan. N-linked (GlcNAc...) asparagine glycosylation is found at Asn-421 and Asn-432. The LRR 17; degenerate repeat unit spans residues 497 to 518 (LMVLVLRSNAFYGPVYNSTTYL). 3 N-linked (GlcNAc...) asparagine glycosylation sites follow: Asn-513, Asn-544, and Asn-562. The stretch at 520–544 (FPRLSIIDISNNDFVGSLPQDYFAN) is one LRR 18 repeat. LRR repeat units lie at residues 608–632 (FRGF…IGLL), 633–656 (SELL…LANI), 657–680 (TNLE…LGNL), and 682–705 (FLSN…QFGT). N-linked (GlcNAc...) asparagine glycans are attached at residues Asn-639, Asn-655, Asn-668, Asn-679, Asn-687, and Asn-707. Residues 753 to 773 (IAAAIAFGPGVFCGFVIGHIF) traverse the membrane as a helical segment. At 774–784 (TSYKHLWFIAR) the chain is on the cytoplasmic side.

It belongs to the RLP family.

The protein resides in the cell membrane. The sequence is that of Receptor-like protein 38 from Arabidopsis thaliana (Mouse-ear cress).